We begin with the raw amino-acid sequence, 220 residues long: Uracil-DNA glycosylase (220 aa).

Asp61 acts as the Proton acceptor in catalysis.

It belongs to the uracil-DNA glycosylase (UDG) superfamily. UNG family.

It is found in the cytoplasm. The catalysed reaction is Hydrolyzes single-stranded DNA or mismatched double-stranded DNA and polynucleotides, releasing free uracil.. In terms of biological role, excises uracil residues from the DNA which can arise as a result of misincorporation of dUMP residues by DNA polymerase or due to deamination of cytosine. The sequence is that of Uracil-DNA glycosylase from Glaesserella parasuis serovar 5 (strain SH0165) (Haemophilus parasuis).